We begin with the raw amino-acid sequence, 98 residues long: Large ribosomal subunit protein uL23 (98 aa).

This sequence belongs to the universal ribosomal protein uL23 family. In terms of assembly, part of the 50S ribosomal subunit. Contacts protein L29, and trigger factor when it is bound to the ribosome.

In terms of biological role, one of the early assembly proteins it binds 23S rRNA. One of the proteins that surrounds the polypeptide exit tunnel on the outside of the ribosome. Forms the main docking site for trigger factor binding to the ribosome. This is Large ribosomal subunit protein uL23 from Streptococcus pneumoniae serotype 19F (strain G54).